Reading from the N-terminus, the 1091-residue chain is ATPase family AAA domain-containing protein 2 (1091 aa).

A disordered region spans residues L32–R211. The segment covering K53–E62 has biased composition (basic and acidic residues). Over residues S74–E119 the composition is skewed to acidic residues. Residue K148 forms a Glycyl lysine isopeptide (Lys-Gly) (interchain with G-Cter in SUMO2) linkage. 4 positions are modified to phosphoserine: S158, S168, S173, and S241. G298–T305 is a binding site for ATP. Phosphoserine is present on residues S577 and S582. 2 coiled-coil regions span residues L801 to R825 and Y917 to G943. The region spanning E811–E923 is the Bromo domain. K959 participates in a covalent cross-link: Glycyl lysine isopeptide (Lys-Gly) (interchain with G-Cter in SUMO2). The interval N961 to V985 is disordered. A compositionally biased stretch (basic and acidic residues) spans G966 to K979. S970 is subject to Phosphoserine. A Glycyl lysine isopeptide (Lys-Gly) (interchain with G-Cter in SUMO2) cross-link involves residue K979. T980 and T983 each carry phosphothreonine. At S1003 the chain carries Phosphoserine. Residue T1024 is modified to Phosphothreonine.

The protein belongs to the AAA ATPase family. As to quaternary structure, interaction with ESR1 and NCOA3 is enhanced by estradiol. Interacts with acetylated lysine residues on histone H1.4, H2A, H2B and H3 (in vitro).

It localises to the nucleus. The enzyme catalyses ATP + H2O = ADP + phosphate + H(+). Its function is as follows. May be a transcriptional coactivator of the nuclear receptor ESR1 required to induce the expression of a subset of estradiol target genes, such as CCND1, MYC and E2F1. May play a role in the recruitment or occupancy of CREBBP at some ESR1 target gene promoters. May be required for histone hyperacetylation. In Pongo abelii (Sumatran orangutan), this protein is ATPase family AAA domain-containing protein 2 (ATAD2).